Consider the following 503-residue polypeptide: AMP phosphorylase (503 aa).

AMP is bound by residues glycine 168, 194–199 (SRAITS), and threonine 203. The active-site Proton donor is aspartate 256. Residues serine 264 and lysine 288 each contribute to the AMP site.

This sequence belongs to the thymidine/pyrimidine-nucleoside phosphorylase family. Type 2 subfamily.

It catalyses the reaction AMP + phosphate = alpha-D-ribose 1,5-bisphosphate + adenine. The enzyme catalyses CMP + phosphate = cytosine + alpha-D-ribose 1,5-bisphosphate. The catalysed reaction is UMP + phosphate = alpha-D-ribose 1,5-bisphosphate + uracil. Catalyzes the conversion of AMP and phosphate to adenine and ribose 1,5-bisphosphate (R15P). Exhibits phosphorylase activity toward CMP and UMP in addition to AMP. Functions in an archaeal AMP degradation pathway, together with R15P isomerase and RubisCO. In Methanocaldococcus jannaschii (strain ATCC 43067 / DSM 2661 / JAL-1 / JCM 10045 / NBRC 100440) (Methanococcus jannaschii), this protein is AMP phosphorylase.